We begin with the raw amino-acid sequence, 375 residues long: Alanine racemase (375 aa).

The active-site Proton acceptor; specific for D-alanine is Lys-45. N6-(pyridoxal phosphate)lysine is present on Lys-45. Arg-141 lines the substrate pocket. The active-site Proton acceptor; specific for L-alanine is the Tyr-270. Substrate is bound at residue Met-318.

This sequence belongs to the alanine racemase family. It depends on pyridoxal 5'-phosphate as a cofactor.

The enzyme catalyses L-alanine = D-alanine. It functions in the pathway amino-acid biosynthesis; D-alanine biosynthesis; D-alanine from L-alanine: step 1/1. Its function is as follows. Catalyzes the interconversion of L-alanine and D-alanine. May also act on other amino acids. The polypeptide is Alanine racemase (alr) (Pseudoalteromonas atlantica (strain T6c / ATCC BAA-1087)).